The sequence spans 379 residues: Probable homogentisate phytyltransferase 2, chloroplastic (379 aa).

Residues 1–39 are disordered; the sequence is MASLASPPLPCRAAATASRSGRPAPRLLGPPPPPASPLL. Residues 1–65 constitute a chloroplast transit peptide; sequence MASLASPPLP…WSRRDAVRVC (65 aa). 8 helical membrane passes run 121 to 141, 174 to 194, 195 to 215, 220 to 240, 252 to 272, 299 to 319, 328 to 348, and 361 to 378; these read WLVF…GYIV, LVVL…GPFI, TSLY…PFRL, VAAF…GVYY, WSSP…VIAI, IAFL…AVAF, TVMV…TWVL, and YYRF…FFPL.

It belongs to the UbiA prenyltransferase family.

The protein localises to the plastid. The protein resides in the chloroplast thylakoid membrane. It catalyses the reaction phytyl diphosphate + homogentisate + H(+) = 2-methyl-6-phytyl-1,4-benzene-1,4-diol + CO2 + diphosphate. It functions in the pathway cofactor biosynthesis; tocopherol biosynthesis. Involved in the synthesis of tocopherol (vitamin E). Catalyzes the condensation of homogentisate and phytyl diphosphate to form dimethylphytylhydrquinone. The protein is Probable homogentisate phytyltransferase 2, chloroplastic (HPT2) of Oryza sativa subsp. japonica (Rice).